The sequence spans 232 residues: 5'-methylthioadenosine/S-adenosylhomocysteine nucleosidase (232 aa).

Glu-12 (proton acceptor) is an active-site residue. Substrate is bound by residues Gly-78, Ile-152, and 173 to 174; that span reads ME. The Proton donor role is filled by Asp-197.

It belongs to the PNP/UDP phosphorylase family. MtnN subfamily. Homodimer.

The enzyme catalyses S-adenosyl-L-homocysteine + H2O = S-(5-deoxy-D-ribos-5-yl)-L-homocysteine + adenine. It carries out the reaction S-methyl-5'-thioadenosine + H2O = 5-(methylsulfanyl)-D-ribose + adenine. The catalysed reaction is 5'-deoxyadenosine + H2O = 5-deoxy-D-ribose + adenine. Its pathway is amino-acid biosynthesis; L-methionine biosynthesis via salvage pathway; S-methyl-5-thio-alpha-D-ribose 1-phosphate from S-methyl-5'-thioadenosine (hydrolase route): step 1/2. In terms of biological role, catalyzes the irreversible cleavage of the glycosidic bond in both 5'-methylthioadenosine (MTA) and S-adenosylhomocysteine (SAH/AdoHcy) to adenine and the corresponding thioribose, 5'-methylthioribose and S-ribosylhomocysteine, respectively. Also cleaves 5'-deoxyadenosine, a toxic by-product of radical S-adenosylmethionine (SAM) enzymes, into 5-deoxyribose and adenine. Thus, is required for in vivo function of the radical SAM enzymes biotin synthase and lipoic acid synthase, that are inhibited by 5'-deoxyadenosine accumulation. This Salmonella choleraesuis (strain SC-B67) protein is 5'-methylthioadenosine/S-adenosylhomocysteine nucleosidase.